The following is a 119-amino-acid chain: Holo-[acyl-carrier-protein] synthase (119 aa).

Mg(2+) contacts are provided by Asp8 and Glu58.

This sequence belongs to the P-Pant transferase superfamily. AcpS family. The cofactor is Mg(2+).

Its subcellular location is the cytoplasm. The catalysed reaction is apo-[ACP] + CoA = holo-[ACP] + adenosine 3',5'-bisphosphate + H(+). Functionally, transfers the 4'-phosphopantetheine moiety from coenzyme A to a Ser of acyl-carrier-protein. In Halalkalibacterium halodurans (strain ATCC BAA-125 / DSM 18197 / FERM 7344 / JCM 9153 / C-125) (Bacillus halodurans), this protein is Holo-[acyl-carrier-protein] synthase.